The following is a 37-amino-acid chain: Unknown protein 25 (37 aa).

In Pseudotsuga menziesii (Douglas-fir), this protein is Unknown protein 25.